The following is a 154-amino-acid chain: Ribosomal RNA large subunit methyltransferase H (154 aa).

Gly103 serves as a coordination point for S-adenosyl-L-methionine.

The protein belongs to the RNA methyltransferase RlmH family. In terms of assembly, homodimer.

Its subcellular location is the cytoplasm. It carries out the reaction pseudouridine(1915) in 23S rRNA + S-adenosyl-L-methionine = N(3)-methylpseudouridine(1915) in 23S rRNA + S-adenosyl-L-homocysteine + H(+). In terms of biological role, specifically methylates the pseudouridine at position 1915 (m3Psi1915) in 23S rRNA. In Gemmatimonas aurantiaca (strain DSM 14586 / JCM 11422 / NBRC 100505 / T-27), this protein is Ribosomal RNA large subunit methyltransferase H.